The sequence spans 521 residues: 56 kDa type-specific antigen (521 aa).

The N-terminal stretch at 1–22 (MRKIMLIASAMSALSLPFSANA) is a signal peptide. The helical transmembrane segment at 64-86 (LPLIKGMPFGVTLAAGMTITPGV) threads the bilayer. A disordered region spans residues 386-415 (LGVDQGQEGGCSKDKKQSDTTAEESKKEGK). The span at 396–415 (CSKDKKQSDTTAEESKKEGK) shows a compositional bias: basic and acidic residues. The helical transmembrane segment at 469–484 (TGMVGSLALGVAANVA) threads the bilayer.

It is found in the cell membrane. In terms of biological role, may be an adherent factor for rickettsial adsorption to the host-cell surface and a determinant of virulence of individual rickettsial strain. It is the major outer membrane protein. This Orientia tsutsugamushi (Rickettsia tsutsugamushi) protein is 56 kDa type-specific antigen.